Reading from the N-terminus, the 146-residue chain is MRRTLKAVGAAAAAATCVLAATAGTAQAEAPKAESLYAPSALVLTVGQGENAESAAVERAVTLTCAPRPGGTHPSAAAACAELAKVNGQFARLVGASSDAICTKEWRPVTVSVVGAWNGKHVNWTSTFANQCTMKAGLGEGAALTF.

The N-terminal stretch at 1–28 is a signal peptide; the sequence is MRRTLKAVGAAAAAATCVLAATAGTAQA. Disulfide bonds link Cys-65–Cys-80 and Cys-102–Cys-132.

It belongs to the protease inhibitor I16 (SSI) family. As to quaternary structure, homodimer.

It localises to the secreted. Functionally, strong inhibitor of bacterial serine proteases such as subtilisin. This chain is Subtilisin inhibitor (vsi), found in Streptomyces violaceus (Streptomyces venezuelae).